Reading from the N-terminus, the 314-residue chain is GMP synthase [glutamine-hydrolyzing] subunit B (314 aa).

The GMPS ATP-PPase domain occupies 2–186 (FDPKKFVEEA…LGIPDEIVER (185 aa)). Residue 29-35 (SGGVDST) coordinates ATP.

In terms of assembly, heterodimer composed of a glutamine amidotransferase subunit (A) and a GMP-binding subunit (B).

The enzyme catalyses XMP + L-glutamine + ATP + H2O = GMP + L-glutamate + AMP + diphosphate + 2 H(+). The protein operates within purine metabolism; GMP biosynthesis; GMP from XMP (L-Gln route): step 1/1. Catalyzes the synthesis of GMP from XMP. In Methanopyrus kandleri (strain AV19 / DSM 6324 / JCM 9639 / NBRC 100938), this protein is GMP synthase [glutamine-hydrolyzing] subunit B (guaAB).